The primary structure comprises 202 residues: Cutinase (202 aa).

Positions 1 to 20 (MKTSAQQLLSALLLPLSVLA) are cleaved as a signal peptide. Cys-31 and Cys-106 are oxidised to a cystine. Residue Ser-117 is the Nucleophile of the active site. Cys-165 and Cys-172 are oxidised to a cystine. Residue Asp-169 is part of the active site. The active-site Proton donor/acceptor is the His-182.

This sequence belongs to the cutinase family. The 2 disulfide bonds play a critical role in holding the catalytic residues in juxta-position; reduction of the disulfide bridges results in the complete inactivation of the enzyme.

Its subcellular location is the secreted. It catalyses the reaction cutin + H2O = cutin monomers.. Its function is as follows. Catalyzes the hydrolysis of complex carboxylic polyesters found in the cell wall of plants. Degrades cutin, a macromolecule that forms the structure of the plant cuticle. Allows pathogenic fungi to penetrate through the cuticular barrier into the host plant during the initial stage of fungal infection. In Botryotinia fuckeliana (Noble rot fungus), this protein is Cutinase.